The chain runs to 162 residues: uncharacterized protein (162 aa).

Residues 1-18 (MRKTFLTLLCVSSAIAHA) form the signal peptide.

Belongs to the fimbrial protein family.

In terms of biological role, part of the yfcOPQRSUV fimbrial operon. Could contribute to adhesion to various surfaces in specific environmental niches. Increases adhesion to eukaryotic T24 bladder epithelial cells in the absence of fim genes. This is an uncharacterized protein from Escherichia coli (strain K12).